Consider the following 445-residue polypeptide: Tyrosine--tRNA ligase, mitochondrial (445 aa).

An L-tyrosine-binding site is contributed by tyrosine 33. An ATP-binding site is contributed by aspartate 37. The 'HIGH' region motif lies at 38-47; it reads PTAASLHVGN. Residues aspartate 77, tyrosine 184, glutamine 188, aspartate 191, and glutamine 210 each coordinate L-tyrosine. The short motif at 245–249 is the 'KMSKS' region element; it reads KLGKS. Lysine 248 is an ATP binding site. The S4 RNA-binding domain occupies 384–445; it reads QPFSRLLRTL…GKRTFVLDSL (62 aa).

It belongs to the class-I aminoacyl-tRNA synthetase family. As to quaternary structure, homodimer.

It is found in the mitochondrion matrix. The catalysed reaction is tRNA(Tyr) + L-tyrosine + ATP = L-tyrosyl-tRNA(Tyr) + AMP + diphosphate + H(+). Catalyzes the attachment of tyrosine to tRNA(Tyr) in a two-step reaction: tyrosine is first activated by ATP to form Tyr-AMP and then transferred to the acceptor end of tRNA(Tyr). In Schizosaccharomyces pombe (strain 972 / ATCC 24843) (Fission yeast), this protein is Tyrosine--tRNA ligase, mitochondrial.